A 528-amino-acid chain; its full sequence is Glutamate--cysteine ligase (528 aa).

Belongs to the glutamate--cysteine ligase type 1 family. Type 1 subfamily.

The enzyme catalyses L-cysteine + L-glutamate + ATP = gamma-L-glutamyl-L-cysteine + ADP + phosphate + H(+). It functions in the pathway sulfur metabolism; glutathione biosynthesis; glutathione from L-cysteine and L-glutamate: step 1/2. This chain is Glutamate--cysteine ligase, found in Janthinobacterium sp. (strain Marseille) (Minibacterium massiliensis).